Reading from the N-terminus, the 193-residue chain is dITP/XTP pyrophosphatase (193 aa).

Position 7-12 (7-12 (SENENK)) interacts with substrate. Asp-65 (proton acceptor) is an active-site residue. Asp-65 lines the Mg(2+) pocket. Substrate-binding positions include Ser-66, 144–147 (FGYD), Lys-167, and 172–173 (HR).

This sequence belongs to the HAM1 NTPase family. As to quaternary structure, homodimer. Requires Mg(2+) as cofactor.

It catalyses the reaction XTP + H2O = XMP + diphosphate + H(+). The enzyme catalyses dITP + H2O = dIMP + diphosphate + H(+). The catalysed reaction is ITP + H2O = IMP + diphosphate + H(+). In terms of biological role, pyrophosphatase that catalyzes the hydrolysis of nucleoside triphosphates to their monophosphate derivatives, with a high preference for the non-canonical purine nucleotides XTP (xanthosine triphosphate), dITP (deoxyinosine triphosphate) and ITP. Seems to function as a house-cleaning enzyme that removes non-canonical purine nucleotides from the nucleotide pool, thus preventing their incorporation into DNA/RNA and avoiding chromosomal lesions. This is dITP/XTP pyrophosphatase from Tropheryma whipplei (strain TW08/27) (Whipple's bacillus).